A 230-amino-acid polypeptide reads, in one-letter code: UPF0173 metal-dependent hydrolase Rsph17029_0942 (230 aa).

Belongs to the UPF0173 family.

This Cereibacter sphaeroides (strain ATCC 17029 / ATH 2.4.9) (Rhodobacter sphaeroides) protein is UPF0173 metal-dependent hydrolase Rsph17029_0942.